A 434-amino-acid polypeptide reads, in one-letter code: UDP-N-acetylenolpyruvoylglucosamine reductase (434 aa).

An FAD-binding PCMH-type domain is found at 51 to 238 (IGAAPAGVVE…TAVEFQLTTD (188 aa)). R216 is a catalytic residue. S299 acts as the Proton donor in catalysis. The active site involves E425.

The protein belongs to the MurB family. FAD is required as a cofactor.

It localises to the cytoplasm. The catalysed reaction is UDP-N-acetyl-alpha-D-muramate + NADP(+) = UDP-N-acetyl-3-O-(1-carboxyvinyl)-alpha-D-glucosamine + NADPH + H(+). The protein operates within cell wall biogenesis; peptidoglycan biosynthesis. Cell wall formation. This chain is UDP-N-acetylenolpyruvoylglucosamine reductase, found in Corynebacterium jeikeium (strain K411).